The primary structure comprises 284 residues: Bifunctional protein FolD (284 aa).

NADP(+) contacts are provided by residues 165–167 (GRS), Ser190, and Ile231.

The protein belongs to the tetrahydrofolate dehydrogenase/cyclohydrolase family. Homodimer.

The catalysed reaction is (6R)-5,10-methylene-5,6,7,8-tetrahydrofolate + NADP(+) = (6R)-5,10-methenyltetrahydrofolate + NADPH. It catalyses the reaction (6R)-5,10-methenyltetrahydrofolate + H2O = (6R)-10-formyltetrahydrofolate + H(+). It functions in the pathway one-carbon metabolism; tetrahydrofolate interconversion. Functionally, catalyzes the oxidation of 5,10-methylenetetrahydrofolate to 5,10-methenyltetrahydrofolate and then the hydrolysis of 5,10-methenyltetrahydrofolate to 10-formyltetrahydrofolate. In Lysinibacillus sphaericus (strain C3-41), this protein is Bifunctional protein FolD.